The following is a 388-amino-acid chain: Succinate--CoA ligase [ADP-forming] subunit beta (388 aa).

The ATP-grasp domain maps to 9–244 (KEILRKFGVA…PDEEDPKETQ (236 aa)). ATP-binding positions include Lys46, 53-55 (GRG), Glu99, Cys102, and Glu107. Positions 199 and 213 each coordinate Mg(2+). Substrate-binding positions include Asn264 and 321–323 (GIM).

This sequence belongs to the succinate/malate CoA ligase beta subunit family. As to quaternary structure, heterotetramer of two alpha and two beta subunits. The cofactor is Mg(2+).

The catalysed reaction is succinate + ATP + CoA = succinyl-CoA + ADP + phosphate. The enzyme catalyses GTP + succinate + CoA = succinyl-CoA + GDP + phosphate. Its pathway is carbohydrate metabolism; tricarboxylic acid cycle; succinate from succinyl-CoA (ligase route): step 1/1. Its function is as follows. Succinyl-CoA synthetase functions in the citric acid cycle (TCA), coupling the hydrolysis of succinyl-CoA to the synthesis of either ATP or GTP and thus represents the only step of substrate-level phosphorylation in the TCA. The beta subunit provides nucleotide specificity of the enzyme and binds the substrate succinate, while the binding sites for coenzyme A and phosphate are found in the alpha subunit. The chain is Succinate--CoA ligase [ADP-forming] subunit beta from Anaeromyxobacter dehalogenans (strain 2CP-1 / ATCC BAA-258).